The chain runs to 222 residues: uncharacterized protein (222 aa).

A signal peptide (tat-type signal) is located at residues 1–27; that stretch reads MSFTRRKFVLGMGTVIFFTGSASSLLA. 4Fe-4S ferredoxin-type domains lie at 37–66, 83–114, and 115–144; these read YAMIHDESRCNGCNICARACRKTNHAPAQG, TQYHFFRQSCQHCEDAPCIDVCPTGASWRDEQ, and GIVRVEKSQCIGCSYCIGACPYQVRYLNPV. [4Fe-4S] cluster contacts are provided by C46, C49, C52, C56, C92, C95, C100, C104, C124, C127, C130, C134, C151, C154, C167, and C171.

Post-translationally, predicted to be exported by the Tat system. The position of the signal peptide cleavage has not been experimentally proven.

This is an uncharacterized protein from Escherichia coli O157:H7.